Reading from the N-terminus, the 712-residue chain is Testis-specific gene 10 protein (712 aa).

Position 161 is a phosphoserine (serine 161). The interval 571–703 (QMTNERISMQ…SPDRDLDRSL (133 aa)) is interaction with HIF1A. Residues 673–699 (YHLGSMKPNTKCHSPERAHHRSPDRDL) form a disordered region. The segment covering 685–699 (HSPERAHHRSPDRDL) has biased composition (basic and acidic residues). Residue serine 702 is modified to Phosphoserine.

It belongs to the CEP135/TSGA10 family. As to quaternary structure, interacts with HIF1A. Post-translationally, processed into N-terminal 27-kDa and C-terminal 55-kDa fragments. In terms of tissue distribution, expressed in testis, predominantly in elongated spermatids (at protein level). Detected in spermatocytes only at the mRNA, but not at the protein level.

The protein localises to the cytoplasm. Its subcellular location is the cytoskeleton. The protein resides in the microtubule organizing center. It is found in the centrosome. It localises to the centriole. Plays a role in spermatogenesis. When overexpressed, prevents nuclear localization of HIF1A. This chain is Testis-specific gene 10 protein (Tsga10), found in Rattus norvegicus (Rat).